The following is a 632-amino-acid chain: MTQQTMSFQAEVKQLLHLMIHSLYSNKEIFLRELVSNASDAADKLRFEALENNALYESDPNLRIRLSFDKAARTITIDDNGIGMSRDEAIANLGTIARSGTKEFFSKLSGDQQKDAALIGQFGVGFYSGFIVADRITVETRRAGLPASEGVRWESAGEGDFQVDTIERAARGTTITLHLREGEDELLSSYRLKSIVQKYSDHVALPILMKKEEWDQEKGEMVEKDEDETINQASALWTRAKSEVTDEQYKQFYQHVAHDHQDPLAWTHNRVEGRSEYTQLLFVPSHAPFDLWNRDYRGGLKLYVKRVFIMDDAEQLLPQYLRFIKGVVDSSDLPLNVSREILQESRDVKAIREGVTKRALSMLEELANAEDDAGKEKYKTFWSAFGQVLKEGVGEDHANRERVAKLLRFASTHGDTDAQDVALADYVARMKPEQTKLYYVTADTWQAAKNSPHLEVFRKKGVEVLLLTDRVDEWMLSFLHEFDGKPLASVARGDLDLGALNDDEKKAQEETGEAMKPVVDKMKETLGEKVKDVRVTFRLTDSPSCLVADDNDMSGYLQRMLKAAGQSAPSFQPILEINPEHPLVKALKADGADFGDWCHLLFDQALLAEGGALEDPASFVKRTNALLLSRAA.

Positions Met-1–Arg-339 are a; substrate-binding. Residues Glu-340–Arg-559 form a b region. A c region spans residues Met-560 to Ala-632.

It belongs to the heat shock protein 90 family. Homodimer.

Its subcellular location is the cytoplasm. In terms of biological role, molecular chaperone. Has ATPase activity. The chain is Chaperone protein HtpG from Burkholderia pseudomallei (strain 1106a).